Consider the following 238-residue polypeptide: Ribonuclease PH (238 aa).

Residues arginine 86 and 124 to 126 (GTR) each bind phosphate.

Belongs to the RNase PH family. In terms of assembly, homohexameric ring arranged as a trimer of dimers.

It carries out the reaction tRNA(n+1) + phosphate = tRNA(n) + a ribonucleoside 5'-diphosphate. Its function is as follows. Phosphorolytic 3'-5' exoribonuclease that plays an important role in tRNA 3'-end maturation. Removes nucleotide residues following the 3'-CCA terminus of tRNAs; can also add nucleotides to the ends of RNA molecules by using nucleoside diphosphates as substrates, but this may not be physiologically important. Probably plays a role in initiation of 16S rRNA degradation (leading to ribosome degradation) during starvation. The protein is Ribonuclease PH of Mesorhizobium japonicum (strain LMG 29417 / CECT 9101 / MAFF 303099) (Mesorhizobium loti (strain MAFF 303099)).